The primary structure comprises 264 residues: Triosephosphate isomerase (264 aa).

13 to 15 (NWK) is a substrate binding site. H98 acts as the Electrophile in catalysis. E170 serves as the catalytic Proton acceptor. Residues G176, S216, and 237 to 238 (GG) contribute to the substrate site.

The protein belongs to the triosephosphate isomerase family. As to quaternary structure, homodimer.

The protein resides in the cytoplasm. It carries out the reaction D-glyceraldehyde 3-phosphate = dihydroxyacetone phosphate. Its pathway is carbohydrate biosynthesis; gluconeogenesis. The protein operates within carbohydrate degradation; glycolysis; D-glyceraldehyde 3-phosphate from glycerone phosphate: step 1/1. Its function is as follows. Involved in the gluconeogenesis. Catalyzes stereospecifically the conversion of dihydroxyacetone phosphate (DHAP) to D-glyceraldehyde-3-phosphate (G3P). The protein is Triosephosphate isomerase of Protochlamydia amoebophila (strain UWE25).